The following is a 2276-amino-acid chain: MARRVNKKKSPVKAARKIDGQIGRRVVDGVRAKSSRQRHQAVLYQAPTPTVIRRKTTKTAIVKKTVVVVKKGGKVVKKSSKTGQKVKAVKAPKVKAPSKKGNDRLTPRVITEYQENPFFYDPQVPEYISASVYHRWITRAVRNGNMKEIKDYYKSKKCQKSAIYTSFAYSFDTSACDEALRQDIKFATEFFKMNNKMEVDNSYHPGKEPNLLQKKTTGRKNYYMLGRHTRQIEMGRGGKEGNNALLNYDTRTDEPNPLTKLIEDNVTYTKLYQLCKIPDGPIVEHHIEMHFVTAVRMGHRDLASALAQGPVKMHCNDLHRATLKDQKLPAKILPVSVAKKAYMNKNITPLHTAAISNSTHMLEAMRAVYPTINIPDQDNWYTMHYAACAPGTAPMEFLLKNGGSVTMLTKQTETPLHVAARAGRAVNCTFLMKEMLDLEKGDDGESTIRADRSIINARTRSGNSALHLAVLRNNLDVVDALLAEPTIVVDNPTSTGQNRLTPLMMACGKGYLEMAKKLVEKGALVEGKDKKKRTPLIHAMLNGQIHTAAFLLAKGASLTLADSSGNTAAHYAAAYGFLDCLKLLASIDDNILSEPNDWQLYPLSVAYLKGHYGIVTWLLEGPHKDKANINAKDNNGATLLSNLLSYADETMHKELLSQIEYLVARKADASLADSSGQTPLHLFSMQRIILKGSGEAAENDAMRMTLDNYKKCFNTLIKAGAKVDVYDHEDNTPLHYALTNGNLMLFNLMLDKVANKRNLFEKWANHQNFLHEILALPMKVYGDQVLWKGETLTKPAYDVLPILKELHENLPDLFEKWISEVNKAGYSPIVEAIKQYQALAANKKLRGEADQNGNPGFGNAIARGRVHNQFGRDRMNQSQAPHCDSYELKTFISTVNELFEWVIRLGPFQLTQKYINSENSAAVTLANLAMSIPIECGRHQQNQLALFKILIKLSKEFNKVDEFLTQKNEKDDVLIVQAIMFDKPNVVELILDTASEMHLIHGTHNAIKENELEVVVHKTIIMYMIEMRMWELIPKVNASSEFWKSKDAKGNSVWHYAARVNSHKTVGLFKMIESKGVRRETNDDGRSVLHVATLACDGSADSVLEPIAWLSTRCPIDAVDKFNRTALHYAFGNENDFKEGNVPFGESDPIAVVSLLSSLIRPEQIEIADVNGNTILHLAAIKNSTICLMTLIRKKCHVDLKNKDGNTPLALAVHHGRQSSALTLIQANADVTEKIFVPALKPTSDFDQNSSGTEAEKFWKWHGKEKKVLEDLHTTIPASVVSKGGSWEAMVYVLLDVLGQNTGSMAQLTDAALRRGQLNLANQLLKSIEALIDGAVLNSSYDLLDTFAEKCFGALTSEETIEKTVLNRIILTRGLGLKQPETMKIIRTALQNGNWNLLNFLKSEMGTAWKNQKIETPTENPIRSLLIYMNEKSVSSEAIGFLEELRQMRGVNIDALCQLEIPGKFKKILDYGLIPPISFAVLQENPNMIRALRNAGASLKTQDDYGRTPLMYAIMTNNRSVVDAIVGDGKLAVVLHKQKAVATGPRCVAVPMRFGATSRAFIPAAAFASVPARVESDEEEEDNSGSESGEDGAASENKSEHGSENGESGNGSDDEDDDDDDSSPPPAKKSRIAKEAAGPSTGPKRKKLVITDPSLFSARDHKENNPLHYFIEPLAWENVELLGDLAAANKTAIVQCLIDKRSPNPIELAAMKMNRRMKSEMLKIVKNAAFPRPIKETKLTLQQVHIEPLSDVDEDAAKFLAKWVEEKDKKKTSEAPKPHKSSTYSTNGLVSFCDETQQYFDVLMNKTDLMYGRCGFHNFYRMQIIKRRDAELFILFTNWGRIGSGMGEFQTTPFNSLELAAKEFKSIFKSKSGNEWAPLANFRDMPKKYRLVETDSTPTSLAEIELTWKKNTEKDPIRRMIADISDAKTLKTYASQVQMYGGSSQPFGRFTKENIEKAKLVLDKLEKNANRIKQMVEAQTGVVESNLLDAYITTSELSGDYYSLIPSGEYEFSNLTRLDNVEEIARHRARLNRCQEIETATRLLCAAEFRQDLDRVDYIRSAIQCEYRLETPDSDISQRLLQWIHNSGGKQAKVKMILEISPMLSTEKFEPFVNDDNQKFLWHGTKATNLMSILKNGFLIDPPSACKNGNLFGSGIYLADSFEKSTHYCQPSAGGINYMLVCQTALGKVRTLDTIPYHYMNQSSSSAEKYEDTLHYIGDRFPAGSLTNDGVGMPLLPLRKRDPIQGSNYGFGTLDFSEYIVRNPNRVLPKYIVMYK.

2 stretches are compositionally biased toward basic residues: residues 1-15 (MARR…VKAA) and 87-98 (KAVKAPKVKAPS). Disordered regions lie at residues 1–20 (MARR…KIDG) and 79–103 (SSKT…KGND). 15 ANK repeats span residues 345–374 (KNIT…TINI), 378–407 (DNWY…SVTM), 411–440 (QTET…DLEK), 461–490 (SGNS…IVVD), 498–527 (NRLT…LVEG), 531–560 (KKRT…SLTL), 564–593 (SGNT…NILS), 598–627 (WQLY…KDKA), 675–725 (SGQT…KVDV), 729–758 (EDNT…NKRN), 970–999 (KDDV…EMHL), 1171–1200 (NGNT…HVDL), 1204–1233 (DGNT…DVTE), 1472–1501 (GLIP…SLKT), and 1505–1535 (YGRT…AVVL). Positions 1570 to 1649 (VPARVESDEE…STGPKRKKLV (80 aa)) are disordered. Acidic residues-rich tracts occupy residues 1576 to 1590 (SDEE…ESGE) and 1612 to 1622 (SDDEDDDDDDS). The ANK 16 repeat unit spans residues 1662–1706 (KENNPLHYFIEPLAWENVELLGDLAAANKTAIVQCLIDKRSPNPI). One can recognise a WGR domain in the interval 1788-1889 (GLVSFCDETQ…ANFRDMPKKY (102 aa)). The region spanning 1910–2045 (KNTEKDPIRR…EIETATRLLC (136 aa)) is the PARP alpha-helical domain. In terms of domain architecture, PARP catalytic spans 2047-2276 (AEFRQDLDRV…VLPKYIVMYK (230 aa)).

Expressed throughout the head and tail, in germ cells and somatic cells.

It is found in the nucleus. It localises to the chromosome. The enzyme catalyses NAD(+) + (ADP-D-ribosyl)n-acceptor = nicotinamide + (ADP-D-ribosyl)n+1-acceptor + H(+).. It catalyses the reaction L-aspartyl-[protein] + NAD(+) = 4-O-(ADP-D-ribosyl)-L-aspartyl-[protein] + nicotinamide. The catalysed reaction is L-glutamyl-[protein] + NAD(+) = 5-O-(ADP-D-ribosyl)-L-glutamyl-[protein] + nicotinamide. Poly[ADP-ribose] polymerases modify various nuclear proteins by poly(ADP-ribosyl)ation, a post-translational modification synthesized after DNA damage that appears as an obligatory step in a detection/signaling pathway leading to the reparation of DNA strand breaks and programmed cell death. In Caenorhabditis elegans, this protein is Poly [ADP-ribose] polymerase tankyrase.